The following is a 136-amino-acid chain: Neuropeptide CCHamide-2 (136 aa).

The N-terminal stretch at 1-24 (MKSTISLLLVVICTVVLAAQQSQA) is a signal peptide. Cys-28 and Cys-35 are oxidised to a cystine. His-39 carries the post-translational modification Histidine amide. The interval 42-78 (RSLSPGSGSGTGVGGGMGEAASGGQEPDYVRPNGLLP) is disordered. Positions 43-136 (SLSPGSGSGT…ANSAELNGVN (94 aa)) are excised as a propeptide. A compositionally biased stretch (gly residues) spans 48–59 (SGSGTGVGGGMG).

In terms of tissue distribution, expressed in endocrine cells of the larval midgut (at protein level). Also expressed in endocrine cells of the midgut of adult males and females (at protein level). In the midgut, expression occurs mainly in the anterior region (at protein level). In the larval central nervous system, expressed in about 40 neurons in the brain hemispheres and ventral nerve cord (at protein level). Highly expressed in larval and adult gut with low levels in larval and adult brain. Very little expression in the larval fat body. However, another study shows high levels of expression in the larval fat body as well as the larval gut with low levels in the larval central nervous system.

It is found in the secreted. Functionally, ligand for the CCHamide-2 receptor CCHa2-R. In one study, shown to be an orexigenic peptide which induces appetite and stimulates food intake, leading to the release of insulin-like peptides which stimulate growth. In another study, shown to be a nutrient-sensitive peptide derived from peripheral tissues which controls growth by directly regulating the production and release of insulin-like peptides. This is Neuropeptide CCHamide-2 from Drosophila melanogaster (Fruit fly).